A 120-amino-acid chain; its full sequence is Large ribosomal subunit protein uL18 (120 aa).

The protein belongs to the universal ribosomal protein uL18 family. Part of the 50S ribosomal subunit; part of the 5S rRNA/L5/L18/L25 subcomplex. Contacts the 5S and 23S rRNAs.

This is one of the proteins that bind and probably mediate the attachment of the 5S RNA into the large ribosomal subunit, where it forms part of the central protuberance. The sequence is that of Large ribosomal subunit protein uL18 from Nitrobacter hamburgensis (strain DSM 10229 / NCIMB 13809 / X14).